A 297-amino-acid chain; its full sequence is Mitochondrial substrate carrier family protein P (297 aa).

Solcar repeat units follow at residues 12-98, 104-189, and 201-293; these read KPSW…IKNH, SSSF…LKRI, and ISGT…LSNF. The next 6 helical transmembrane spans lie at 15-35, 66-86, 107-127, 165-185, 207-227, and 262-282; these read WVSF…VAPL, GIKG…PYAA, FQIF…TYPL, IQPT…TFEF, LIAG…FDVV, and ILAL…TASI.

Belongs to the mitochondrial carrier (TC 2.A.29) family.

It is found in the mitochondrion inner membrane. In terms of biological role, mitochondrial solute carriers shuttle metabolites, nucleotides, and cofactors through the mitochondrial inner membrane. Required for the accumulation of coenzyme A in the mitochondrial matrix. This chain is Mitochondrial substrate carrier family protein P (mcfP), found in Dictyostelium discoideum (Social amoeba).